The chain runs to 358 residues: 3-dehydroquinate synthase (358 aa).

NAD(+) is bound by residues 75–80, 109–113, 133–134, K146, and K155; these read SGEGSK, GVLGD, and TT. Zn(2+) is bound by residues E188, H245, and H262.

The protein belongs to the sugar phosphate cyclases superfamily. Dehydroquinate synthase family. It depends on Co(2+) as a cofactor. The cofactor is Zn(2+). Requires NAD(+) as cofactor.

It is found in the cytoplasm. It carries out the reaction 7-phospho-2-dehydro-3-deoxy-D-arabino-heptonate = 3-dehydroquinate + phosphate. It functions in the pathway metabolic intermediate biosynthesis; chorismate biosynthesis; chorismate from D-erythrose 4-phosphate and phosphoenolpyruvate: step 2/7. Functionally, catalyzes the conversion of 3-deoxy-D-arabino-heptulosonate 7-phosphate (DAHP) to dehydroquinate (DHQ). This Methylacidiphilum infernorum (isolate V4) (Methylokorus infernorum (strain V4)) protein is 3-dehydroquinate synthase.